The chain runs to 373 residues: Alanine dehydrogenase (373 aa).

Residues Arg-15 and Lys-74 each contribute to the substrate site. His-95 (proton donor/acceptor) is an active-site residue. Residues Ser-133, 177–178, Asp-197, Ser-219, 238–239, 266–269, and 298–301 contribute to the NAD(+) site; these read QA, VL, IAID, and VANM. The active-site Proton donor/acceptor is Asp-269.

This sequence belongs to the AlaDH/PNT family. Homohexamer. Trimer of dimer.

It carries out the reaction L-alanine + NAD(+) + H2O = pyruvate + NH4(+) + NADH + H(+). It participates in amino-acid degradation; L-alanine degradation via dehydrogenase pathway; NH(3) and pyruvate from L-alanine: step 1/1. Functionally, catalyzes the reversible reductive amination of pyruvate to L-alanine. May play a role in cell wall synthesis as L-alanine is an important constituent of the peptidoglycan layer. This Staphylococcus haemolyticus (strain JCSC1435) protein is Alanine dehydrogenase (ald).